The following is a 461-amino-acid chain: Phosphatidate cytidylyltransferase 1 (461 aa).

The interval 1–68 is disordered; that stretch reads MLELRHRGGC…PEVPPSSDRT (68 aa). At Arg-7 the chain carries Omega-N-methylarginine. Over residues 22–56 the composition is skewed to basic and acidic residues; sequence REGEAAGGDHETESTSDKETDIDDRYGDLDARGDS. A phosphoserine mark is found at Ser-35 and Ser-37. 6 helical membrane-spanning segments follow: residues 96-116, 149-169, 183-203, 230-250, 279-299, and 357-377; these read MISL…LLVL, FLLC…FATF, HRFI…LSLV, LVIQ…SSVI, GFIG…YVLS, and IALS…ASGF.

This sequence belongs to the CDS family. As to quaternary structure, homodimer. Interacts with FOS; this interaction may enhance catalytic activity. The cofactor is Mg(2+). In terms of tissue distribution, expressed in adult brain, eye, smooth muscle and testis. Highly expressed in the inner segment of the photoreceptor layer of adult retina.

It localises to the endoplasmic reticulum membrane. It carries out the reaction a 1,2-diacyl-sn-glycero-3-phosphate + CTP + H(+) = a CDP-1,2-diacyl-sn-glycerol + diphosphate. It catalyses the reaction 1-octadecanoyl-2-(5Z,8Z,11Z,14Z-eicosatetraenoyl)-sn-glycero-3-phosphate + CTP + H(+) = 1-octadecanoyl-2-(5Z,8Z,11Z,14Z-eicosatetraenoyl)-sn-glycero-3-cytidine-5'-diphosphate + diphosphate. The catalysed reaction is 1-octadecanoyl-2-(9Z,12Z-octadecadienoyl)-sn-glycero-3-phosphate + CTP + H(+) = 1-octadecanoyl-2-(9Z,12Z-octadecadienoyl)-sn-glycero-3-cytidine-5'-diphosphate + diphosphate. The enzyme catalyses 1-hexadecanoyl-2-(5Z,8Z,11Z,14Z-eicosatetraenoyl)-sn-glycero-3-phosphate + CTP + H(+) = 1-hexadecanoyl-2-(5Z,8Z,11Z,14Z-eicosatetraenoyl)-sn-glycero-3-cytidine-5'-diphosphate + diphosphate. It carries out the reaction 1,2-di-(5Z,8Z,11Z,14Z)-eicosatetraenoyl-sn-glycero-3-phosphate + CTP + H(+) = 1,2-di-(5Z,8Z,11Z,14Z-eicosatetraenoyl)-sn-glycero-3-cytidine-5'-diphosphate + diphosphate. It catalyses the reaction 1-octadecanoyl-2-(9Z-octadecenoyl)-sn-glycero-3-phosphate + CTP + H(+) = 1-octadecanoyl-2-(9Z-octadecenoyl)-sn-glycero-3-cytidine-5'-diphosphate + diphosphate. The catalysed reaction is 1-octadecanoyl-2-(4Z,7Z,10Z,13Z,16Z,19Z-docosahexaenoyl)-sn-glycero-3-phosphate + CTP + H(+) = 1-octadecanoyl-2-(4Z,7Z,10Z,13Z,16Z,19Z-docosahexaenoyl)-sn-glycero-3-cytidine-5'-diphosphate + diphosphate. The enzyme catalyses 1,2-di-(9Z,12Z-octadecadienoyl)-sn-glycero-3-phosphate + CTP + H(+) = 1,2-di-(9Z,12Z-octadecadienoyl)-sn-glycero-3-cytidine-5'-diphosphate + diphosphate. It carries out the reaction 1,2-di-(9Z-octadecenoyl)-sn-glycero-3-phosphate + CTP + H(+) = 1,2-di-(9Z-octadecenoyl)-sn-glycero-3-cytidine-5'-diphosphate + diphosphate. The protein operates within phospholipid metabolism; CDP-diacylglycerol biosynthesis; CDP-diacylglycerol from sn-glycerol 3-phosphate: step 3/3. Functionally, catalyzes the conversion of phosphatidic acid (PA) to CDP-diacylglycerol (CDP-DAG), an essential intermediate in the synthesis of phosphatidylglycerol, cardiolipin and phosphatidylinositol. Exhibits almost no acyl chain preference for PA, showing no discrimination for the sn-1/sn-2 acyl chain composition of PAs. Plays an important role in regulating the growth of lipid droplets which are storage organelles at the center of lipid and energy homeostasis. Positively regulates the differentiation and development of adipocytes. This is Phosphatidate cytidylyltransferase 1 from Mus musculus (Mouse).